The following is a 556-amino-acid chain: 2-isopropylmalate synthase (556 aa).

Positions 33-307 (PIWLSSDLRD…DPQLDFSDID (275 aa)) constitute a Pyruvate carboxyltransferase domain. D42, H246, H248, and N282 together coordinate Mg(2+). Positions 439-556 (ATAPYTLKGH…ALHQAQEAAA (118 aa)) are regulatory domain.

It belongs to the alpha-IPM synthase/homocitrate synthase family. LeuA type 2 subfamily. In terms of assembly, homodimer. Requires Mg(2+) as cofactor.

It is found in the cytoplasm. It catalyses the reaction 3-methyl-2-oxobutanoate + acetyl-CoA + H2O = (2S)-2-isopropylmalate + CoA + H(+). It participates in amino-acid biosynthesis; L-leucine biosynthesis; L-leucine from 3-methyl-2-oxobutanoate: step 1/4. In terms of biological role, catalyzes the condensation of the acetyl group of acetyl-CoA with 3-methyl-2-oxobutanoate (2-ketoisovalerate) to form 3-carboxy-3-hydroxy-4-methylpentanoate (2-isopropylmalate). This is 2-isopropylmalate synthase from Stutzerimonas stutzeri (strain A1501) (Pseudomonas stutzeri).